Reading from the N-terminus, the 447-residue chain is Signal recognition particle 54 kDa protein (447 aa).

Residues 103-110, 185-189, and 245-248 contribute to the GTP site; these read GVQGSGKT, DTAGR, and TKMD.

It belongs to the GTP-binding SRP family. SRP54 subfamily. As to quaternary structure, part of the signal recognition particle protein translocation system, which is composed of SRP and FtsY. Archaeal SRP consists of a 7S RNA molecule of 300 nucleotides and two protein subunits: SRP54 and SRP19.

It is found in the cytoplasm. The catalysed reaction is GTP + H2O = GDP + phosphate + H(+). In terms of biological role, involved in targeting and insertion of nascent membrane proteins into the cytoplasmic membrane. Binds to the hydrophobic signal sequence of the ribosome-nascent chain (RNC) as it emerges from the ribosomes. The SRP-RNC complex is then targeted to the cytoplasmic membrane where it interacts with the SRP receptor FtsY. The sequence is that of Signal recognition particle 54 kDa protein from Saccharolobus islandicus (strain Y.N.15.51 / Yellowstone #2) (Sulfolobus islandicus).